The following is a 214-amino-acid chain: Nucleoside triphosphate pyrophosphatase (214 aa).

Asp79 acts as the Proton acceptor in catalysis.

It belongs to the Maf family. Requires a divalent metal cation as cofactor.

The protein localises to the cytoplasm. It carries out the reaction a ribonucleoside 5'-triphosphate + H2O = a ribonucleoside 5'-phosphate + diphosphate + H(+). The enzyme catalyses a 2'-deoxyribonucleoside 5'-triphosphate + H2O = a 2'-deoxyribonucleoside 5'-phosphate + diphosphate + H(+). In terms of biological role, nucleoside triphosphate pyrophosphatase. May have a dual role in cell division arrest and in preventing the incorporation of modified nucleotides into cellular nucleic acids. This is Nucleoside triphosphate pyrophosphatase from Rhodococcus opacus (strain B4).